The primary structure comprises 334 residues: Phosphate acyltransferase (334 aa).

The protein belongs to the PlsX family. Homodimer. Probably interacts with PlsY.

The protein resides in the cytoplasm. The enzyme catalyses a fatty acyl-[ACP] + phosphate = an acyl phosphate + holo-[ACP]. It functions in the pathway lipid metabolism; phospholipid metabolism. In terms of biological role, catalyzes the reversible formation of acyl-phosphate (acyl-PO(4)) from acyl-[acyl-carrier-protein] (acyl-ACP). This enzyme utilizes acyl-ACP as fatty acyl donor, but not acyl-CoA. The polypeptide is Phosphate acyltransferase (Clostridium tetani (strain Massachusetts / E88)).